The following is a 149-amino-acid chain: Large-conductance mechanosensitive channel (149 aa).

3 helical membrane passes run 10–30, 41–61, and 87–107; these read FALKGNVMDLAVGVIIGGAFA, IMPIVAFIVGGEINFKNMFLI, and GSFITVLINFLILAFIIFMMV.

Belongs to the MscL family. In terms of assembly, homopentamer.

It localises to the cell inner membrane. Functionally, channel that opens in response to stretch forces in the membrane lipid bilayer. May participate in the regulation of osmotic pressure changes within the cell. In Psychrobacter cryohalolentis (strain ATCC BAA-1226 / DSM 17306 / VKM B-2378 / K5), this protein is Large-conductance mechanosensitive channel.